A 266-amino-acid polypeptide reads, in one-letter code: HLA class II histocompatibility antigen, DRB1 beta chain (266 aa).

The N-terminal stretch at M1 to S29 is a signal peptide. Residues G30–V124 are beta-1. The Extracellular portion of the chain corresponds to G30–K227. A disulfide bridge connects residues C44 and C108. Residue N48 is glycosylated (N-linked (GlcNAc...) asparagine). 5 residues coordinate a peptide antigen: D86, W90, H110, N111, and R122. Residues Q125–K227 form a beta-2 region. The 89-residue stretch at P126–T214 folds into the Ig-like C1-type domain. Residues C146 and C202 are joined by a disulfide bond. A helical membrane pass occupies residues M228 to I248. The Cytoplasmic portion of the chain corresponds to Y249–S266. Residue K254 forms a Glycyl lysine isopeptide (Lys-Gly) (interchain with G-Cter in ubiquitin) linkage.

Heterotrimer that consists of an alpha chain HLA-DRA, a beta chain HLA-DRB1 and a peptide (peptide-MHCII). Newly synthesized alpha and beta chains forms a heterodimer (MHCII) that associates with the CD74/invariant chain (Ii) in the endoplasmic reticulum (ER). Ii is a trimer composed of three subunits and each subunit interacts with one MHCII dimer, blocking the peptide-binding cleft. As a result, MHCII molecules cannot bind peptides present in the ER. The complex of MHCII and CD74/Ii is transported in vesicles from ER to Golgi to lysosomes, where it encounters antigenic peptides generated via proteolysis of endocytosed antigens. MHCII dimers are dissociated from CD74/Ii by the combined action of proteolysis and HLA-DM. Lysosomal enzymes such as cathepsin, degrade CD74/Ii leaving a 24 amino acid remnant called class II-associated Ii or CLIP. Interacts (via the peptide binding cleft) with CLIP; this interaction inhibits antigen peptide binding before entry in the endosomal compartment. The displacement of CLIP and replacement by a high affinity peptide in lysosomes is performed by HLA-DM heterodimer. HLA-DM catalyzes CLIP dissociation from MHCII, stabilizes empty MHCII and mediates the selection of high affinity peptides. Interacts with HLA-DM heterodimer; this interaction is direct. Interacts with TCR (via CDR3). Interacts (via beta-2 domain) with CD4 coreceptor (via Ig-like V-type domain); this interaction is of exceptionally low affinity yet necessary for optimal recognition of antigenic peptides. In terms of assembly, (Microbial infection) Interacts with Staphylococcus aureus enterotoxin A/entA, enterotoxin B/entB, enterotoxin C1/entC1, enterotoxin D/entD and enterotoxin H/entH. Enterotoxins bind outside the peptide-binding cleft of MHCII: enterotoxin H/entH interacts via the beta-1 domain of MHCII and in a zinc-dependent way, whereas enterotoxin B/entB interacts primarily via the alpha-1 domain. As to quaternary structure, (Microbial infection) Interacts with Epstein-Barr virus gp42 protein. Post-translationally, ubiquitinated by MARCHF1 and MARCHF8 at Lys-254 leading to sorting into the endosome system and down-regulation of MHCII. As to expression, expressed in professional APCs: monocyte/macrophages, dendritic cells and B cells (at protein level). Expressed in thymic epithelial cells (at protein level).

The protein resides in the cell membrane. Its subcellular location is the endoplasmic reticulum membrane. It localises to the lysosome membrane. It is found in the late endosome membrane. The protein localises to the autolysosome membrane. In terms of biological role, a beta chain of antigen-presenting major histocompatibility complex class II (MHCII) molecule. In complex with the alpha chain HLA-DRA, displays antigenic peptides on professional antigen presenting cells (APCs) for recognition by alpha-beta T cell receptor (TCR) on HLA-DRB1-restricted CD4-positive T cells. This guides antigen-specific T-helper effector functions, both antibody-mediated immune response and macrophage activation, to ultimately eliminate the infectious agents and transformed cells. Typically presents extracellular peptide antigens of 10 to 30 amino acids that arise from proteolysis of endocytosed antigens in lysosomes. In the tumor microenvironment, presents antigenic peptides that are primarily generated in tumor-resident APCs likely via phagocytosis of apoptotic tumor cells or macropinocytosis of secreted tumor proteins. Presents peptides derived from intracellular proteins that are trapped in autolysosomes after macroautophagy, a mechanism especially relevant for T cell selection in the thymus and central immune tolerance. The selection of the immunodominant epitopes follows two processing modes: 'bind first, cut/trim later' for pathogen-derived antigenic peptides and 'cut first, bind later' for autoantigens/self-peptides. The anchor residue at position 1 of the peptide N-terminus, usually a large hydrophobic residue, is essential for high affinity interaction with MHCII molecules. Its function is as follows. Allele DRB1*01:01: Displays an immunodominant epitope derived from Bacillus anthracis pagA/protective antigen, PA (KLPLYISNPNYKVNVYAVT), to both naive and PA-specific memory CD4-positive T cells. Presents immunodominant HIV-1 gag peptide (FRDYVDRFYKTLRAEQASQE) on infected dendritic cells for recognition by TRAV24-TRBV2 TCR on CD4-positive T cells and controls viral load. May present to T-helper 1 cells several HRV-16 epitopes derived from capsid proteins VP1 (PRFSLPFLSIASAYYMFYDG) and VP2 (PHQFINLRSNNSATLIVPYV), contributing to viral clearance. Displays commonly recognized peptides derived from IAV external protein HA (PKYVKQNTLKLAT and SNGNFIAPEYAYKIVK) and from internal proteins M, NP and PB1, with M-derived epitope (GLIYNRMGAVTTEV) being the most immunogenic. Presents a self-peptide derived from COL4A3 (GWISLWKGFSF) to TCR (TRAV14 biased) on CD4-positive, FOXP3-positive regulatory T cells and mediates immune tolerance to self. May present peptides derived from oncofetal trophoblast glycoprotein TPBG 5T4, known to be recognized by both T-helper 1 and regulatory T cells. Displays with low affinity a self-peptide derived from MBP (VHFFKNIVTPRTP). Allele DRB1*03:01: May present to T-helper 1 cells an HRV-16 epitope derived from capsid protein VP2 (NEKQPSDDNWLNFDGTLLGN), contributing to viral clearance. Displays self-peptides derived from retinal SAG (NRERRGIALDGKIKHE) and thyroid TG (LSSVVVDPSIRHFDV). Presents viral epitopes derived from HHV-6B gH/U48 and U85 antigens to polyfunctional CD4-positive T cells with cytotoxic activity implicated in control of HHV-6B infection. Presents several immunogenic epitopes derived from C.tetani neurotoxin tetX, playing a role in immune recognition and long-term protection. Functionally, allele DRB1*04:01: Presents an immunodominant bacterial epitope derived from M.tuberculosis esxB/culture filtrate antigen CFP-10 (EISTNIRQAGVQYSR), eliciting CD4-positive T cell effector functions such as IFNG production and cytotoxic activity. May present to T-helper 1 cells an HRV-16 epitope derived from capsid protein VP2 (NEKQPSDDNWLNFDGTLLGN), contributing to viral clearance. Presents tumor epitopes derived from melanoma-associated TYR antigen (QNILLSNAPLGPQFP and DYSYLQDSDPDSFQD), triggering CD4-positive T cell effector functions such as GMCSF production. Displays preferentially citrullinated self-peptides derived from VIM (GVYATR/citSSAVR and SAVRAR/citSSVPGVR) and ACAN (VVLLVATEGR/ CitVRVNSAYQDK). Displays self-peptides derived from COL2A1. In terms of biological role, allele DRB1*04:02: Displays native or citrullinated self-peptides derived from VIM. Its function is as follows. Allele DRB1*04:04: May present to T-helper 1 cells several HRV-16 epitopes derived from capsid proteins VP1 (HIVMQYMYVPPGAPIPTTRN) and VP2 (RGDSTITSQDVANAVVGYGV), contributing to viral clearance. Displays preferentially citrullinated self-peptides derived from VIM (SAVRAR/citSSVPGVR). Allele DRB1*04:05: May present to T-helper 1 cells an immunogenic epitope derived from tumor-associated antigen WT1 (KRYFKLSHLQMHSRKH), likely providing for effective antitumor immunity in a wide range of solid and hematological malignancies. Functionally, allele DRB1*05:01: Presents an immunodominant HIV-1 gag peptide (FRDYVDRFYKTLRAEQASQE) on infected dendritic cells for recognition by TRAV24-TRBV2 TCR on CD4-positive T cells and controls viral load. In terms of biological role, allele DRB1*07:01: Upon EBV infection, presents latent antigen EBNA2 peptide (PRSPTVFYNIPPMPLPPSQL) to CD4-positive T cells, driving oligoclonal expansion and selection of a dominant virus-specific memory T cell subset with cytotoxic potential to directly eliminate virus-infected B cells. May present to T-helper 1 cells several HRV-16 epitopes derived from capsid proteins VP1 (PRFSLPFLSIASAYYMFYDG) and VP2 (VPYVNAVPMDSMVRHNNWSL), contributing to viral clearance. In the context of tumor immunesurveillance, may present to T-helper 1 cells an immunogenic epitope derived from tumor-associated antigen WT1 (MTEYKLVVVGAVGVGKSALTIQLI), likely providing for effective antitumor immunity in a wide range of solid and hematological malignancies. In metastatic epithelial tumors, presents to intratumoral CD4-positive T cells a KRAS neoantigen (MTEYKLVVVGAVGVGKSALTIQLI) carrying G12V hotspot driver mutation and may mediate tumor regression. Its function is as follows. Allele DRB1*11:01: Displays an immunodominant HIV-1 gag peptide (FRDYVDRFYKTLRAEQASQE) on infected dendritic cells for recognition by TRAV24-TRBV2 TCR on CD4-positive T cells and controls viral load. May present to T-helper 1 cells an HRV-16 epitope derived from capsid protein VP2 (SDRIIQITRGDSTITSQDVA), contributing to viral clearance. Presents several immunogenic epitopes derived from C.tetani neurotoxin tetX, playing a role in immune recognition and longterm protection. In the context of tumor immunesurveillance, may present tumor-derived neoantigens to CD4-positive T cells and trigger anti-tumor helper functions. Allele DRB1*13:01: Presents viral epitopes derived from HHV-6B antigens to polyfunctional CD4-positive T cells implicated in control of HHV-6B infection. Functionally, allele DRB1*15:01: May present to T-helper 1 cells an HRV-16 epitope derived from capsid protein VP2 (SNNSATLIVPYVNAVPMDSM), contributing to viral clearance. Displays a self-peptide derived from MBP (ENPVVHFFKNIVTPR). May present to T-helper 1 cells an immunogenic epitope derived from tumor-associated antigen WT1 (KRYFKLSHLQMHSRKH), likely providing for effective antitumor immunity in a wide range of solid and hematological malignancies. In terms of biological role, allele DRB1*15:02: Displays an immunodominant HIV-1 gag peptide (FRDYVDRFYKTLRAEQASQE) on infected dendritic cells for recognition by TRAV24-TRBV2 TCR on CD4-positive T cells and controls viral load. May present to T-helper 1 cells an immunogenic epitope derived from tumor-associated antigen WT1 (KRYFKLSHLQMHSRKH), likely providing for effective antitumor immunity in a wide range of solid and hematological malignancies. Its function is as follows. (Microbial infection) Acts as a receptor for Epstein-Barr virus on lymphocytes. The sequence is that of HLA class II histocompatibility antigen, DRB1 beta chain from Homo sapiens (Human).